The primary structure comprises 178 residues: C-phycoerythrin class 2 subunit beta (178 aa).

2 residues coordinate phycourobilin: Cys-50 and Cys-61. 2 residues coordinate (2R,3E)-phycoerythrobilin: Cys-82 and Cys-159.

It belongs to the phycobiliprotein family. As to quaternary structure, heterodimer of an alpha and a beta chain. Post-translationally, contains two covalently linked phycoerythrobilin chromophores and one covalently linked phycourobilin chromophore.

It is found in the cellular thylakoid membrane. In terms of biological role, light-harvesting photosynthetic bile pigment-protein from the phycobiliprotein complex. The chain is C-phycoerythrin class 2 subunit beta (mpeB) from Synechococcus sp. (strain WH8103).